Reading from the N-terminus, the 96-residue chain is MF6 protein (96 aa).

The protein is MF6 protein of Myxoma virus (strain Uriarra) (MYXV).